We begin with the raw amino-acid sequence, 237 residues long: 2,3,4,5-tetrahydropyridine-2,6-dicarboxylate N-acetyltransferase (237 aa).

The protein belongs to the transferase hexapeptide repeat family. DapH subfamily.

The enzyme catalyses (S)-2,3,4,5-tetrahydrodipicolinate + acetyl-CoA + H2O = L-2-acetamido-6-oxoheptanedioate + CoA. The protein operates within amino-acid biosynthesis; L-lysine biosynthesis via DAP pathway; LL-2,6-diaminopimelate from (S)-tetrahydrodipicolinate (acetylase route): step 1/3. Its function is as follows. Catalyzes the transfer of an acetyl group from acetyl-CoA to tetrahydrodipicolinate. This Limosilactobacillus fermentum (strain NBRC 3956 / LMG 18251) (Lactobacillus fermentum) protein is 2,3,4,5-tetrahydropyridine-2,6-dicarboxylate N-acetyltransferase.